The chain runs to 98 residues: Large ribosomal subunit protein bL27 (98 aa).

The propeptide occupies 1 to 9; the sequence is MLKMNLQLF.

Belongs to the bacterial ribosomal protein bL27 family. In terms of processing, the N-terminus is cleaved by ribosomal processing cysteine protease Prp.

The protein is Large ribosomal subunit protein bL27 of Desulfitobacterium hafniense (strain DSM 10664 / DCB-2).